The primary structure comprises 323 residues: GTP 3',8-cyclase (323 aa).

One can recognise a Radical SAM core domain in the interval 4–233 (KYGREIDYLR…NGPAKYISIE (230 aa)). A GTP-binding site is contributed by Arg-13. [4Fe-4S] cluster is bound by residues Cys-20 and Cys-24. Tyr-26 provides a ligand contact to S-adenosyl-L-methionine. Position 27 (Cys-27) interacts with [4Fe-4S] cluster. A GTP-binding site is contributed by Arg-63. Gly-67 is a binding site for S-adenosyl-L-methionine. Thr-94 is a GTP binding site. Residue Ser-118 participates in S-adenosyl-L-methionine binding. Lys-154 is a GTP binding site. Met-188 contributes to the S-adenosyl-L-methionine binding site. The [4Fe-4S] cluster site is built by Cys-250 and Cys-253. 255–257 (RIR) contacts GTP. [4Fe-4S] cluster is bound at residue Cys-267.

It belongs to the radical SAM superfamily. MoaA family. Monomer and homodimer. It depends on [4Fe-4S] cluster as a cofactor.

The enzyme catalyses GTP + AH2 + S-adenosyl-L-methionine = (8S)-3',8-cyclo-7,8-dihydroguanosine 5'-triphosphate + 5'-deoxyadenosine + L-methionine + A + H(+). It functions in the pathway cofactor biosynthesis; molybdopterin biosynthesis. Catalyzes the cyclization of GTP to (8S)-3',8-cyclo-7,8-dihydroguanosine 5'-triphosphate. The polypeptide is GTP 3',8-cyclase (Clostridium perfringens (strain 13 / Type A)).